We begin with the raw amino-acid sequence, 313 residues long: Methionyl-tRNA formyltransferase (313 aa).

Position 113–116 (113–116 (SLLP)) interacts with (6S)-5,6,7,8-tetrahydrofolate.

Belongs to the Fmt family.

The enzyme catalyses L-methionyl-tRNA(fMet) + (6R)-10-formyltetrahydrofolate = N-formyl-L-methionyl-tRNA(fMet) + (6S)-5,6,7,8-tetrahydrofolate + H(+). In terms of biological role, attaches a formyl group to the free amino group of methionyl-tRNA(fMet). The formyl group appears to play a dual role in the initiator identity of N-formylmethionyl-tRNA by promoting its recognition by IF2 and preventing the misappropriation of this tRNA by the elongation apparatus. The sequence is that of Methionyl-tRNA formyltransferase from Francisella tularensis subsp. holarctica (strain FTNF002-00 / FTA).